Consider the following 78-residue polypeptide: Large ribosomal subunit protein bL28 (78 aa).

Belongs to the bacterial ribosomal protein bL28 family.

This is Large ribosomal subunit protein bL28 from Dichelobacter nodosus (strain VCS1703A).